The primary structure comprises 345 residues: Phosphoribosylformylglycinamidine cyclo-ligase (345 aa).

The protein belongs to the AIR synthase family.

Its subcellular location is the cytoplasm. The enzyme catalyses 2-formamido-N(1)-(5-O-phospho-beta-D-ribosyl)acetamidine + ATP = 5-amino-1-(5-phospho-beta-D-ribosyl)imidazole + ADP + phosphate + H(+). It functions in the pathway purine metabolism; IMP biosynthesis via de novo pathway; 5-amino-1-(5-phospho-D-ribosyl)imidazole from N(2)-formyl-N(1)-(5-phospho-D-ribosyl)glycinamide: step 2/2. The chain is Phosphoribosylformylglycinamidine cyclo-ligase from Shewanella putrefaciens (strain CN-32 / ATCC BAA-453).